The following is a 744-amino-acid chain: Endonuclease MutS2 (744 aa).

315 to 322 (GPNMGGKT) serves as a coordination point for ATP. Positions 668 to 743 (VDLRGLTVAE…GHGVTVVALR (76 aa)) constitute a Smr domain.

This sequence belongs to the DNA mismatch repair MutS family. MutS2 subfamily. In terms of assembly, homodimer. Interacts with MutL. Binds to stalled ribosomes, contacting rRNA.

With respect to regulation, nuclease activity is stimulated by interaction with MutL. ATPase activity is stimulated by dsDNA. Functionally, endonuclease that is involved in the suppression of homologous recombination and may thus have a key role in the control of bacterial genetic diversity. Cleaves the phosphate backbone of oligodeoxynucleotides non-sequence-specifically at the 3' side of the phosphates. Preferably incises the branched DNA structures, especially the D-loop structure over the Holliday junction. Has ATPase activity. Binds to dsDNA but not to ssDNA. In terms of biological role, acts as a ribosome collision sensor, splitting the ribosome into its 2 subunits. Detects stalled/collided 70S ribosomes which it binds and splits by an ATP-hydrolysis driven conformational change. Acts upstream of the ribosome quality control system (RQC), a ribosome-associated complex that mediates the extraction of incompletely synthesized nascent chains from stalled ribosomes and their subsequent degradation. Probably generates substrates for RQC. This chain is Endonuclease MutS2, found in Thermus thermophilus (strain ATCC 27634 / DSM 579 / HB8).